The following is a 419-amino-acid chain: UDP-N-acetylglucosamine 1-carboxyvinyltransferase (419 aa).

Phosphoenolpyruvate is bound at residue 22-23 (KN). R93 contributes to the UDP-N-acetyl-alpha-D-glucosamine binding site. C117 serves as the catalytic Proton donor. C117 is subject to 2-(S-cysteinyl)pyruvic acid O-phosphothioketal. The UDP-N-acetyl-alpha-D-glucosamine site is built by D307 and I329.

This sequence belongs to the EPSP synthase family. MurA subfamily.

It is found in the cytoplasm. It carries out the reaction phosphoenolpyruvate + UDP-N-acetyl-alpha-D-glucosamine = UDP-N-acetyl-3-O-(1-carboxyvinyl)-alpha-D-glucosamine + phosphate. It functions in the pathway cell wall biogenesis; peptidoglycan biosynthesis. Cell wall formation. Adds enolpyruvyl to UDP-N-acetylglucosamine. The sequence is that of UDP-N-acetylglucosamine 1-carboxyvinyltransferase from Shewanella sp. (strain ANA-3).